A 335-amino-acid chain; its full sequence is RNA polymerase sigma factor RpoS (335 aa).

Residues 57–90 form a sigma-70 factor domain-1 region; the sequence is DATQMYLSEIGFSPLLTAEEEVLYARRALRGDEA. Residues 95 to 165 form a sigma-70 factor domain-2 region; the sequence is MIESNLRLVV…ERALMNQTRT (71 aa). The Interaction with polymerase core subunit RpoC signature appears at 119–122; it reads DLIE. Positions 175–250 are sigma-70 factor domain-3; that stretch reads ELNIYLRTAR…DSHNADPEFS (76 aa). Residues 263–316 are sigma-70 factor domain-4; it reads WLDELNPKQKEVLARRFGLLGYEPSTLEEVGREINLTRERVRQIQVEGLRRLRE. Residues 289–308 constitute a DNA-binding region (H-T-H motif); it reads LEEVGREINLTRERVRQIQV.

It belongs to the sigma-70 factor family. RpoS subfamily. As to quaternary structure, interacts with the RNA polymerase core enzyme.

The protein localises to the cytoplasm. Its function is as follows. Sigma factors are initiation factors that promote the attachment of RNA polymerase to specific initiation sites and are then released. This sigma factor is the master transcriptional regulator of the stationary phase and the general stress response. May be required for the persistence of V.cholerae in aquatic habitats. The chain is RNA polymerase sigma factor RpoS from Vibrio cholerae serotype O1 (strain ATCC 39315 / El Tor Inaba N16961).